A 276-amino-acid chain; its full sequence is Checkpoint protein HUS1B (276 aa).

The protein belongs to the HUS1 family. As to quaternary structure, interacts with RAD1 and RAD9B.

This Mus musculus (Mouse) protein is Checkpoint protein HUS1B (Hus1b).